A 69-amino-acid polypeptide reads, in one-letter code: Sec-independent protein translocase protein TatA (69 aa).

The helical transmembrane segment at 1–21 (MGSLSIWHWLIVLAIALLLFG) threads the bilayer. The interval 41 to 69 (KGMNDDEETPPPAQSTTSRTVEHKADESK) is disordered. Over residues 60–69 (TVEHKADESK) the composition is skewed to basic and acidic residues.

The protein belongs to the TatA/E family. The Tat system comprises two distinct complexes: a TatABC complex, containing multiple copies of TatA, TatB and TatC subunits, and a separate TatA complex, containing only TatA subunits. Substrates initially bind to the TatABC complex, which probably triggers association of the separate TatA complex to form the active translocon.

The protein resides in the cell inner membrane. Its function is as follows. Part of the twin-arginine translocation (Tat) system that transports large folded proteins containing a characteristic twin-arginine motif in their signal peptide across membranes. TatA could form the protein-conducting channel of the Tat system. In Rhizobium rhizogenes (strain K84 / ATCC BAA-868) (Agrobacterium radiobacter), this protein is Sec-independent protein translocase protein TatA.